We begin with the raw amino-acid sequence, 227 residues long: Large ribosomal subunit protein uL1 (227 aa).

This sequence belongs to the universal ribosomal protein uL1 family. Part of the 50S ribosomal subunit.

Its function is as follows. Binds directly to 23S rRNA. The L1 stalk is quite mobile in the ribosome, and is involved in E site tRNA release. Protein L1 is also a translational repressor protein, it controls the translation of the L11 operon by binding to its mRNA. The sequence is that of Large ribosomal subunit protein uL1 from Mesoplasma florum (strain ATCC 33453 / NBRC 100688 / NCTC 11704 / L1) (Acholeplasma florum).